Here is a 261-residue protein sequence, read N- to C-terminus: uncharacterized protein (261 aa).

Residues 1–22 (MGVADNEYISVPTGEPVQQQPQ) form a disordered region. A run of 3 helical transmembrane segments spans residues 92–112 (IIIL…ILGL), 122–142 (IVVM…IFLF), and 147–167 (INTI…LMNY).

Its subcellular location is the membrane. This is an uncharacterized protein from Dictyostelium discoideum (Social amoeba).